The primary structure comprises 391 residues: Immediate-early protein 2 (391 aa).

The protein belongs to the herpesviridae US22 family.

The protein localises to the host cytoplasm. The protein resides in the host nucleus. In terms of biological role, involved in the reactivation of latent MCMV in spleen cells. The polypeptide is Immediate-early protein 2 (IE2) (Murid herpesvirus 1 (strain Smith) (MuHV-1)).